The primary structure comprises 550 residues: Arginine--tRNA ligase (550 aa).

Residues 130–140 (ANPTGPIHLGG) carry the 'HIGH' region motif.

This sequence belongs to the class-I aminoacyl-tRNA synthetase family. In terms of assembly, monomer.

Its subcellular location is the cytoplasm. It catalyses the reaction tRNA(Arg) + L-arginine + ATP = L-arginyl-tRNA(Arg) + AMP + diphosphate. This chain is Arginine--tRNA ligase, found in Corynebacterium diphtheriae (strain ATCC 700971 / NCTC 13129 / Biotype gravis).